A 130-amino-acid chain; its full sequence is uncharacterized protein (130 aa).

At 1–58 (MREQLKLFTREIVDFTFLILSGFDYYQTLLISSNSSKKRPKDSSLLSEKKKKKKKKKK) the chain is on the cytoplasmic side. The disordered stretch occupies residues 34–57 (NSSKKRPKDSSLLSEKKKKKKKKK). The chain crosses the membrane as a helical span at residues 59 to 79 (DVLSYLSYLKDLPFVPFLFWQ). Residues 80 to 94 (PGYSQREKNPRQHSL) are Extracellular-facing. Residues 95-115 (FIMTITKPGMISMADMNYVVS) traverse the membrane as a helical segment. The Cytoplasmic segment spans residues 116–130 (KNRSLNRPAERGGNR).

It is found in the membrane. This is an uncharacterized protein from Saccharomyces cerevisiae (strain ATCC 204508 / S288c) (Baker's yeast).